The following is a 247-amino-acid chain: uncharacterized protein (247 aa).

A coiled-coil region spans residues 200–225; it reads SGKYSELKTKVNDIENDLRTLSSNTN.

This is an uncharacterized protein from Acanthamoeba polyphaga (Amoeba).